Reading from the N-terminus, the 78-residue chain is Acyl carrier protein (78 aa).

Residues 2–77 enclose the Carrier domain; sequence SDTVERVKKI…DAVKFIDKAS (76 aa). The residue at position 37 (S37) is an O-(pantetheine 4'-phosphoryl)serine.

This sequence belongs to the acyl carrier protein (ACP) family. In terms of processing, 4'-phosphopantetheine is transferred from CoA to a specific serine of apo-ACP by AcpS. This modification is essential for activity because fatty acids are bound in thioester linkage to the sulfhydryl of the prosthetic group.

The protein resides in the cytoplasm. It functions in the pathway lipid metabolism; fatty acid biosynthesis. Its function is as follows. Carrier of the growing fatty acid chain in fatty acid biosynthesis. In Bartonella quintana (strain Toulouse) (Rochalimaea quintana), this protein is Acyl carrier protein.